A 564-amino-acid chain; its full sequence is E3 ubiquitin-protein ligase RNF168 (564 aa).

The RING-type zinc finger occupies 16–55 (CGICMEILVEPVTLPCNHTLCNPCFQSTVEKANLCCPFCR). A Phosphoserine modification is found at Ser-70. Positions 110–128 (LSKPGELRREYEEEISKVE) match the LR motif 1 motif. Position 134 is a phosphoserine (Ser-134). A UMI motif motif is present at residues 143-151 (EEYIQRLLA). Disordered stretches follow at residues 149 to 179 (LLAEEEEEEKRRTERRRSEMEEQLRGDEELA) and 193 to 291 (NILA…QGPE). Positions 157 to 179 (EKRRTERRRSEMEEQLRGDEELA) are enriched in basic and acidic residues. The MIU motif 1 motif lies at 168-191 (MEEQLRGDEELARRLSTSINSNYE). Position 197 is a phosphoserine (Ser-197). Residue Lys-210 forms a Glycyl lysine isopeptide (Lys-Gly) (interchain with G-Cter in SUMO2) linkage. The segment covering 242 to 259 (KTEHGEDMCKSKETDSSD) has biased composition (basic and acidic residues). Positions 275–288 (PTHSPQTCPETQGQ) are enriched in polar residues. Phosphothreonine occurs at positions 348 and 361. Residues Ser-413 and Ser-414 each carry the phosphoserine modification. An MIU motif 2 motif is present at residues 438–461 (RHKQEEQDRLLALQLQKEADKEKM). The tract at residues 455–564 (EADKEKMVPN…QKSILQMFQR (110 aa)) is disordered. The LR motif 2 signature appears at 465 to 476 (RQKGSPDQYQLR). Over residues 466–480 (QKGSPDQYQLRTSSP) the composition is skewed to polar residues. At Ser-469 the chain carries Phosphoserine. Residues 491–515 (NVKDRNSPKQTADRSKSQRSRKGEY) show a composition bias toward basic and acidic residues. 2 stretches are compositionally biased toward polar residues: residues 519–531 (FESTWKGSVNGTK) and 555–564 (QKSILQMFQR). A Glycyl lysine isopeptide (Lys-Gly) (interchain with G-Cter in SUMO2) cross-link involves residue Lys-524.

The protein belongs to the RNF168 family. Monomer. Interacts with UBE2N/UBC13. In terms of processing, sumoylated with SUMO1 by PIAS4 in response to double-strand breaks (DSBs). Ubiquitinated.

It localises to the nucleus. It catalyses the reaction S-ubiquitinyl-[E2 ubiquitin-conjugating enzyme]-L-cysteine + [acceptor protein]-L-lysine = [E2 ubiquitin-conjugating enzyme]-L-cysteine + N(6)-ubiquitinyl-[acceptor protein]-L-lysine.. It functions in the pathway protein modification; protein ubiquitination. In terms of biological role, E3 ubiquitin-protein ligase required for accumulation of repair proteins to sites of DNA damage. Acts with UBE2N/UBC13 to amplify the RNF8-dependent histone ubiquitination. Recruited to sites of DNA damage at double-strand breaks (DSBs) by binding to ubiquitinated histone H2A and H2AX and amplifies the RNF8-dependent H2A ubiquitination, promoting the formation of 'Lys-63'-linked ubiquitin conjugates. This leads to concentrate ubiquitinated histones H2A and H2AX at DNA lesions to the threshold required for recruitment of TP53BP1 and BRCA1. Also recruited at DNA interstrand cross-links (ICLs) sites and promotes accumulation of 'Lys-63'-linked ubiquitination of histones H2A and H2AX, leading to recruitment of FAAP20 and Fanconi anemia (FA) complex, followed by interstrand cross-link repair. H2A ubiquitination also mediates the ATM-dependent transcriptional silencing at regions flanking DSBs in cis, a mechanism to avoid collision between transcription and repair intermediates. Also involved in class switch recombination in immune system, via its role in regulation of DSBs repair. Following DNA damage, promotes the ubiquitination and degradation of JMJD2A/KDM4A in collaboration with RNF8, leading to unmask H4K20me2 mark and promote the recruitment of TP53BP1 at DNA damage sites. Not able to initiate 'Lys-63'-linked ubiquitination in vitro; possibly due to partial occlusion of the UBE2N/UBC13-binding region. Catalyzes monoubiquitination of 'Lys-13' and 'Lys-15' of nucleosomal histone H2A (H2AK13Ub and H2AK15Ub, respectively). This chain is E3 ubiquitin-protein ligase RNF168, found in Rattus norvegicus (Rat).